Reading from the N-terminus, the 179-residue chain is Bifunctional protein PyrR (179 aa).

The PRPP-binding motif lies at 99–111; it reads VILVDDVLYTGRT.

It belongs to the purine/pyrimidine phosphoribosyltransferase family. PyrR subfamily. In terms of assembly, homodimer and homohexamer; in equilibrium.

The catalysed reaction is UMP + diphosphate = 5-phospho-alpha-D-ribose 1-diphosphate + uracil. Regulates transcriptional attenuation of the pyrimidine nucleotide (pyr) operon by binding in a uridine-dependent manner to specific sites on pyr mRNA. This disrupts an antiterminator hairpin in the RNA and favors formation of a downstream transcription terminator, leading to a reduced expression of downstream genes. In terms of biological role, also displays a weak uracil phosphoribosyltransferase activity which is not physiologically significant. The chain is Bifunctional protein PyrR from Brevibacillus brevis (strain 47 / JCM 6285 / NBRC 100599).